The following is a 158-amino-acid chain: MLYLTQRLEIPSAATASVTLPIDVRVKSRVKVTLNDGREAGLLLPRGLLLRGGDVLSNEEGTEFVQVIAADEGVSVVRCDDPFMLAKACYHLGNRHVPLQIMPGELRYHHDHVLDDMLRQFGLTVTFGQLPFEPEAGAYASESHGHHHAHHDHHAHSH.

It belongs to the UreE family.

Its subcellular location is the cytoplasm. Involved in urease metallocenter assembly. Binds nickel. Probably functions as a nickel donor during metallocenter assembly. This Klebsiella pneumoniae subsp. pneumoniae (strain ATCC 700721 / MGH 78578) protein is Urease accessory protein UreE.